The following is a 938-amino-acid chain: Respiratory burst oxidase homolog protein C (938 aa).

The interval Met1–Ala63 is disordered. Topologically, residues Met1–Arg369 are cytoplasmic. Positions Ala115–Arg141 form a coiled coil. EF-hand-like stretches follow at residues Thr185–Ala195 and Arg222–Gln233. EF-hand domains follow at residues Ser245–Ala280 and Gln289–Gln324. Ca(2+)-binding residues include Asp258, Asp260, Asp262, Arg264, and Glu269. Residues Val370–Gln390 form a helical membrane-spanning segment. Residues Tyr391–Pro402 lie on the Extracellular side of the membrane. The chain crosses the membrane as a helical span at residues Cys403–Leu423. Residues Lys408–Ile565 form the Ferric oxidoreductase domain. Residues Pro424–Val454 lie on the Cytoplasmic side of the membrane. The chain crosses the membrane as a helical span at residues Ile455–Phe475. Residues Pro476–Gly509 lie on the Extracellular side of the membrane. The helical transmembrane segment at Val510–Phe530 threads the bilayer. Over Arg531–Thr545 the chain is Cytoplasmic. A helical transmembrane segment spans residues Gly546 to Val566. The Extracellular portion of the chain corresponds to His567–Arg580. Residues Ser581 to Leu599 form a helical membrane-spanning segment. One can recognise an FAD-binding FR-type domain in the interval Leu599–Asp727. Over Arg600–Glu732 the chain is Cytoplasmic. A helical transmembrane segment spans residues Val733–Ile753. Topologically, residues Val754 to Phe938 are extracellular. Residues Glu762 to Gly796 form a disordered region. Residues Leu767–Met784 are compositionally biased toward polar residues.

Belongs to the RBOH (TC 5.B.1.3) family. In terms of assembly, monomer and homodimer. Post-translationally, phosphorylated by CPK. In terms of tissue distribution, expressed in leaves.

Its subcellular location is the membrane. Calcium-dependent NADPH oxidase that generates superoxide. May be responsible for the oxidative burst in response to pathogen attack in the leaves. The chain is Respiratory burst oxidase homolog protein C (RBOHC) from Solanum tuberosum (Potato).